A 375-amino-acid chain; its full sequence is Actin (375 aa).

Belongs to the actin family.

The protein localises to the cytoplasm. Its subcellular location is the cytoskeleton. The catalysed reaction is ATP + H2O = ADP + phosphate + H(+). Functionally, actins are highly conserved proteins that are involved in various types of cell motility and are ubiquitously expressed in all eukaryotic cells. The protein is Actin of Sterkiella cavicola (Ciliate).